A 535-amino-acid polypeptide reads, in one-letter code: Beta-amylase (535 aa).

Asp-51, His-91, and Asp-99 together coordinate substrate. Glu-184 acts as the Proton donor in catalysis. The substrate site is built by Lys-293, His-298, and Thr-340. Glu-378 serves as the catalytic Proton acceptor. Substrate contacts are provided by residues 379–380 (NA) and Arg-418. 3 consecutive repeat copies span residues 489-499 (GPTGGMGGQAE), 500-510 (GPTCGMGGQVK), and 511-521 (GPTGGMGGQAE). The 4 X 11 AA tandem repeats stretch occupies residues 489–532 (GPTGGMGGQAEGPTCGMGGQVKGPTGGMGGQAEDPTSGIGGELP). The interval 513–535 (TGGMGGQAEDPTSGIGGELPATM) is disordered. Residues 522-532 (DPTSGIGGELP) form a 4; approximate repeat.

It belongs to the glycosyl hydrolase 14 family. In terms of assembly, monomer.

It carries out the reaction Hydrolysis of (1-&gt;4)-alpha-D-glucosidic linkages in polysaccharides so as to remove successive maltose units from the non-reducing ends of the chains.. The protein is Beta-amylase (BMY1) of Hordeum vulgare (Barley).